We begin with the raw amino-acid sequence, 166 residues long: Spiderine-1a (166 aa).

The N-terminal stretch at 1–18 is a signal peptide; that stretch reads MKFALVLLGVCAFYLVNA. Residues 19–58 constitute a propeptide that is removed on maturation; it reads TGDLETELEASELQELQEALDLIGETPLESLEAEELEEAR. Positions 59 to 99 are linear cationic cytotoxin domain; it reads KFKWGKLFSTAKKLYKKGKKLSKNKNFKKALKFGKQLAKNL. Positions 113 to 166 constitute an Oxytoxin-type inhibitor cystine knot (ICK) domain; it reads NNKCWAIGTTCSDDCDCCPEHHCHCPAGKWLPGLFRCTCQVTESDKVNKCPPAE. Disulfide bonds link Cys116/Cys130, Cys123/Cys135, Cys127/Cys162, Cys129/Cys151, and Cys137/Cys149.

The protein belongs to the spiderine family. Cationic/spiderine subfamily. Expressed by the venom gland.

It is found in the secreted. Its function is as follows. Has antimicrobial, insecticidal, cytolytic and cytotoxic activity. Active against E.coli DH5alpha, E.faecalis VKM B 871, B.subtilis VKM B 501, A.globiformis VKM Ac 1112, P.aeruginosa PAO1 and S.aureus 209P in submicromolar or low micromolar ranges. Lyses human erythrocytes. Kills HeLA and A549 cells. The protein is Spiderine-1a of Oxyopes takobius (Lynx spider).